Reading from the N-terminus, the 240-residue chain is Sec-independent protein translocase protein TatC (240 aa).

The next 6 membrane-spanning stretches (helical) occupy residues 15–35, 61–81, 103–123, 152–172, 191–211, and 212–232; these read IISI…AKYV, LFIL…PVIL, LLLG…FIVL, FVLK…VLYV, FIVI…TQVL, and MAIP…LATR.

Belongs to the TatC family. In terms of assembly, forms a complex with TatA.

It is found in the cell inner membrane. In terms of biological role, part of the twin-arginine translocation (Tat) system that transports large folded proteins containing a characteristic twin-arginine motif in their signal peptide across membranes. The polypeptide is Sec-independent protein translocase protein TatC (Aquifex aeolicus (strain VF5)).